Consider the following 353-residue polypeptide: Photosystem II D2 protein (353 aa).

Threonine 2 is modified (N-acetylthreonine). Threonine 2 carries the phosphothreonine modification. Residues 41–61 form a helical membrane-spanning segment; it reads CAYFALGGWFTGTTFVTSWYT. Histidine 118 is a chlorophyll a binding site. A helical transmembrane segment spans residues 125 to 141; sequence GFMLRQFELARSVQLRP. Pheophytin a is bound by residues glutamine 130 and asparagine 143. Residues 153–166 form a helical membrane-spanning segment; that stretch reads VFVSVFLIYPLGQS. Histidine 198 contacts chlorophyll a. A helical transmembrane segment spans residues 208 to 228; that stretch reads AALLCAIHGATVENTLFEDGD. Residues histidine 215 and phenylalanine 262 each contribute to the a plastoquinone site. Histidine 215 provides a ligand contact to Fe cation. Residue histidine 269 coordinates Fe cation. A helical membrane pass occupies residues 279–295; sequence GLWMSALGVVGLALNLR.

It belongs to the reaction center PufL/M/PsbA/D family. As to quaternary structure, PSII is composed of 1 copy each of membrane proteins PsbA, PsbB, PsbC, PsbD, PsbE, PsbF, PsbH, PsbI, PsbJ, PsbK, PsbL, PsbM, PsbT, PsbX, PsbY, PsbZ, Psb30/Ycf12, at least 3 peripheral proteins of the oxygen-evolving complex and a large number of cofactors. It forms dimeric complexes. Requires The D1/D2 heterodimer binds P680, chlorophylls that are the primary electron donor of PSII, and subsequent electron acceptors. It shares a non-heme iron and each subunit binds pheophytin, quinone, additional chlorophylls, carotenoids and lipids. There is also a Cl(-1) ion associated with D1 and D2, which is required for oxygen evolution. The PSII complex binds additional chlorophylls, carotenoids and specific lipids. as cofactor.

It is found in the plastid. Its subcellular location is the chloroplast thylakoid membrane. It carries out the reaction 2 a plastoquinone + 4 hnu + 2 H2O = 2 a plastoquinol + O2. Its function is as follows. Photosystem II (PSII) is a light-driven water:plastoquinone oxidoreductase that uses light energy to abstract electrons from H(2)O, generating O(2) and a proton gradient subsequently used for ATP formation. It consists of a core antenna complex that captures photons, and an electron transfer chain that converts photonic excitation into a charge separation. The D1/D2 (PsbA/PsbD) reaction center heterodimer binds P680, the primary electron donor of PSII as well as several subsequent electron acceptors. D2 is needed for assembly of a stable PSII complex. This chain is Photosystem II D2 protein, found in Phaseolus vulgaris (Kidney bean).